A 271-amino-acid chain; its full sequence is Ribosomal RNA small subunit methyltransferase A (271 aa).

S-adenosyl-L-methionine is bound by residues H11, L13, G38, E58, D86, and N101.

The protein belongs to the class I-like SAM-binding methyltransferase superfamily. rRNA adenine N(6)-methyltransferase family. RsmA subfamily.

The protein resides in the cytoplasm. It carries out the reaction adenosine(1518)/adenosine(1519) in 16S rRNA + 4 S-adenosyl-L-methionine = N(6)-dimethyladenosine(1518)/N(6)-dimethyladenosine(1519) in 16S rRNA + 4 S-adenosyl-L-homocysteine + 4 H(+). Functionally, specifically dimethylates two adjacent adenosines (A1518 and A1519) in the loop of a conserved hairpin near the 3'-end of 16S rRNA in the 30S particle. May play a critical role in biogenesis of 30S subunits. The chain is Ribosomal RNA small subunit methyltransferase A from Helicobacter pylori (strain Shi470).